The following is a 286-amino-acid chain: Tryptophan 2,3-dioxygenase (286 aa).

Residues 53–57 (FIVQH), Tyr115, and Arg119 each bind substrate. Heme is bound at residue His242. Residue Thr256 participates in substrate binding.

This sequence belongs to the tryptophan 2,3-dioxygenase family. Homotetramer. It depends on heme as a cofactor.

The catalysed reaction is L-tryptophan + O2 = N-formyl-L-kynurenine. The protein operates within amino-acid degradation; L-tryptophan degradation via kynurenine pathway; L-kynurenine from L-tryptophan: step 1/2. Functionally, heme-dependent dioxygenase that catalyzes the oxidative cleavage of the L-tryptophan (L-Trp) pyrrole ring and converts L-tryptophan to N-formyl-L-kynurenine. Catalyzes the oxidative cleavage of the indole moiety. The sequence is that of Tryptophan 2,3-dioxygenase from Kineococcus radiotolerans (strain ATCC BAA-149 / DSM 14245 / SRS30216).